A 142-amino-acid chain; its full sequence is MKDINEIKELIPHRYPILMVDRLEELEPGHRAKGVKNVSANEPFLQGHFPDRPLMPGVLQIEAMAQVGACALMSLPENEGKLAVFGGVDKVKFKRQVQPGDVLSIEVELTRVKGSIGKGEGKVYVGDELAAQGQLTFALVEK.

H48 is a catalytic residue.

This sequence belongs to the thioester dehydratase family. FabZ subfamily.

The protein localises to the cytoplasm. The catalysed reaction is a (3R)-hydroxyacyl-[ACP] = a (2E)-enoyl-[ACP] + H2O. In terms of biological role, involved in unsaturated fatty acids biosynthesis. Catalyzes the dehydration of short chain beta-hydroxyacyl-ACPs and long chain saturated and unsaturated beta-hydroxyacyl-ACPs. This chain is 3-hydroxyacyl-[acyl-carrier-protein] dehydratase FabZ, found in Natranaerobius thermophilus (strain ATCC BAA-1301 / DSM 18059 / JW/NM-WN-LF).